The following is a 681-amino-acid chain: Dipeptidyl carboxypeptidase (681 aa).

His-470 contributes to the Zn(2+) binding site. The active site involves Glu-471. Zn(2+) contacts are provided by His-474 and His-477.

This sequence belongs to the peptidase M3 family. Requires Zn(2+) as cofactor.

The protein resides in the cytoplasm. The catalysed reaction is Hydrolysis of unblocked, C-terminal dipeptides from oligopeptides, with broad specificity. Does not hydrolyze bonds in which P1' is Pro, or both P1 and P1' are Gly.. Stimulated by Mn(2+), Mg(2+), Co(2+) and Ca(2+), inhibited by Cu(2+), Ni(2+), Zn(2+), chymostatin and 1,10-phenanthroline. In terms of biological role, removes dipeptides from the C-termini of N-blocked tripeptides, tetrapeptides and larger peptides. In Escherichia coli (strain K12), this protein is Dipeptidyl carboxypeptidase.